The following is a 377-amino-acid chain: Cytochrome b (377 aa).

4 helical membrane-spanning segments follow: residues 36–56 (WGSLLGIFLIIPIITGLFLAM), 80–102 (WLIRFIHVNGASFFFIFLYLHMA), 115–135 (VWLIGCTIYVVSMATAFMGYI), and 181–201 (FFVLHFILPFIILALSIIHLI). Heme b is bound by residues histidine 86 and histidine 100. Histidine 185 and histidine 199 together coordinate heme b. A ubiquinone is bound at residue histidine 204. The next 4 membrane-spanning stretches (helical) occupy residues 227 to 247 (YSSKDLMFLLLLMMIMMVIIF), 291 to 311 (LGGVLTMVFSILILFLLPFIS), 326 to 346 (LFWSFVVNMLILTWIGGMPVV), and 354 to 374 (LTSTFLYFIIILIYSNSFLMI).

Belongs to the cytochrome b family. In terms of assembly, the main subunits of complex b-c1 are: cytochrome b, cytochrome c1 and the Rieske protein. Heme b is required as a cofactor.

Its subcellular location is the mitochondrion inner membrane. Its function is as follows. Component of the ubiquinol-cytochrome c reductase complex (complex III or cytochrome b-c1 complex) that is part of the mitochondrial respiratory chain. The b-c1 complex mediates electron transfer from ubiquinol to cytochrome c. Contributes to the generation of a proton gradient across the mitochondrial membrane that is then used for ATP synthesis. This Myzostoma seymourcollegiorum (Polychaete worm) protein is Cytochrome b (mt:Cyt-b).